Reading from the N-terminus, the 344-residue chain is Methionine import ATP-binding protein MetN (344 aa).

Positions 2 to 241 constitute an ABC transporter domain; sequence IEINQVNKVF…PKTELAHDFI (240 aa). 38-45 contributes to the ATP binding site; the sequence is GSSGAGKS.

Belongs to the ABC transporter superfamily. Methionine importer (TC 3.A.1.24) family. The complex is composed of two ATP-binding proteins (MetN), two transmembrane proteins (MetI) and a solute-binding protein (MetQ).

It localises to the cell inner membrane. The enzyme catalyses L-methionine(out) + ATP + H2O = L-methionine(in) + ADP + phosphate + H(+). It catalyses the reaction D-methionine(out) + ATP + H2O = D-methionine(in) + ADP + phosphate + H(+). Functionally, part of the ABC transporter complex MetNIQ involved in methionine import. Responsible for energy coupling to the transport system. The polypeptide is Methionine import ATP-binding protein MetN (Vibrio vulnificus (strain YJ016)).